Consider the following 806-residue polypeptide: Leucine--tRNA ligase (806 aa).

The 'HIGH' region signature appears at 38 to 48 (PYPSGEIHMGH). Residues 572–576 (KMSKS) carry the 'KMSKS' region motif. Lys-575 contacts ATP.

It belongs to the class-I aminoacyl-tRNA synthetase family.

Its subcellular location is the cytoplasm. The catalysed reaction is tRNA(Leu) + L-leucine + ATP = L-leucyl-tRNA(Leu) + AMP + diphosphate. The protein is Leucine--tRNA ligase of Helicobacter pylori (strain ATCC 700392 / 26695) (Campylobacter pylori).